The chain runs to 282 residues: Eukaryotic translation initiation factor 3 subunit G (282 aa).

A disordered region spans residues 1 to 27 (MSSSKSLDWADDEDYGTGLPSIQTFDN). Phosphoserine occurs at positions 160 and 164. The region spanning 202–280 (ATLRVTNLSD…LILRCEFSKP (79 aa)) is the RRM domain.

Belongs to the eIF-3 subunit G family. In terms of assembly, component of the eukaryotic translation initiation factor 3 (eIF-3) complex. The eIF-3 complex appears to include tif32/eif3a, SPAC25G10.08/eif3b, tif33/eif3c, SPBC4C3.07/eif3f, tif35/eif3g and sum1/eif3i. This set of common subunits may also associate exclusively with either moe1/eif3d and int6/eif3e, or with SPAC821.05/eif3h and SPAC1751.03/eif3m. The eIF-3 complex may also include SPAC3A12.13c/eif3j.

Its subcellular location is the cytoplasm. In terms of biological role, RNA-binding component of the eukaryotic translation initiation factor 3 (eIF-3) complex, which is involved in protein synthesis of a specialized repertoire of mRNAs and, together with other initiation factors, stimulates binding of mRNA and methionyl-tRNAi to the 40S ribosome. The eIF-3 complex specifically targets and initiates translation of a subset of mRNAs involved in cell proliferation. This subunit can bind 18S rRNA. The chain is Eukaryotic translation initiation factor 3 subunit G (tif35) from Schizosaccharomyces pombe (strain 972 / ATCC 24843) (Fission yeast).